Reading from the N-terminus, the 1228-residue chain is Multimerin-1 (1228 aa).

The N-terminal stretch at 1–19 is a signal peptide; the sequence is MKGARLFVLLSSLWSGGIG. N21 carries an N-linked (GlcNAc...) asparagine glycan. Positions 68–98 are disordered; that stretch reads TPEARTSEDSLLKSTLPPSETSAPAEGVRNQ. The span at 79–89 shows a compositional bias: polar residues; it reads LKSTLPPSETS. N-linked (GlcNAc...) asparagine glycosylation is found at N97, N114, and N120. The N-linked (GlcNAc...) (complex) asparagine glycan is linked to N136. The segment at 157 to 200 is disordered; sequence NTVGGTGGIGGVGGTGGVGNRAPRETYLSRGDSSSSQRTDYQKS. Residues 160 to 175 are compositionally biased toward gly residues; sequence GGTGGIGGVGGTGGVG. The short motif at 186 to 188 is the Cell attachment site element; sequence RGD. Residues 187-200 are compositionally biased toward polar residues; the sequence is GDSSSSQRTDYQKS. The EMI domain maps to 207–282; sequence GKNWCAYVHT…PGYSGPKCQL (76 aa). Disulfide bonds link C211–C272, C238–C245, and C271–C280. A glycan (O-linked (Fuc) threonine) is linked at T216. An O-linked (Fuc) threonine glycan is attached at T265. Coiled coils occupy residues 333–365 and 400–430; these read MKLT…KVSE and NDMQ…IQKV. A glycan (N-linked (GlcNAc...) asparagine) is linked at N344. 16 N-linked (GlcNAc...) asparagine glycosylation sites follow: N431, N507, N541, N576, N618, N680, N729, N783, N816, N828, N840, N921, N933, N942, N981, and N1020. Residues 503 to 523 adopt a coiled-coil conformation; sequence YESLNKTLSKLKEVHEQLLST. Coiled-coil stretches lie at residues 580 to 650 and 675 to 726; these read SLEM…EILQ and RKKI…EMED. Residues 819–869 adopt a coiled-coil conformation; that stretch reads NFQKMYQMFNETTSQVRKYQQNMSHLEEKLLLTTKISKNFETRLQDIESKV. Positions 1041-1077 constitute an EGF-like domain; it reads EYSSCSRHPCQNGGTCINGRTSFTCACRHPFTGDNCT. Disulfide bonds link C1045-C1056, C1050-C1065, and C1067-C1076. T1055 is a glycosylation site (O-linked (Fuc) threonine). N-linked (GlcNAc...) asparagine glycosylation occurs at N1075. Residues 1096 to 1228 enclose the C1q domain; it reads RYAPMVAFFA…TFSGYLLYRT (133 aa).

In terms of assembly, multimeric. Composed of varying sized, disulfide-linked multimers, the smallest of which is a homotrimer. Proteolysis of the promultimerin in the N-terminal region, leads to the mature p155 form that is stored in platelets. Interacts with factor V/Va. Post-translationally, the N-terminus is blocked. Extensively N-glycosylated. In terms of processing, O-fucosylated within the EMI domain (at Thr-216 and Thr-265) by FUT10/POFUT3 and FUT11/POFUT4. O-fucosylation at Thr-216 and Thr-1055 are required for facilitating protein folding and secretion. In terms of tissue distribution, synthesized by endothelial cells and megakaryocytes. Stored in platelet alpha granules and endothelial cell Weibel-Palade bodies, following activation of these cells, it is released and attached to megakaryocytes, platelets, endothelium and subendothelium of blood vessels. Not found in plasma. Found in vascular tissues such as placenta, lung, and liver.

Its subcellular location is the secreted. Its function is as follows. Carrier protein for platelet (but not plasma) factor V/Va. Plays a role in the storage and stabilization of factor V in platelets. Upon release following platelet activation, may limit platelet and plasma factor Va-dependent thrombin generation. Ligand for integrin alpha-IIb/beta-3 and integrin alpha-V/beta-3 on activated platelets, and may function as an extracellular matrix or adhesive protein. In Homo sapiens (Human), this protein is Multimerin-1 (MMRN1).